A 66-amino-acid polypeptide reads, in one-letter code: Large ribosomal subunit protein uL29 (66 aa).

Belongs to the universal ribosomal protein uL29 family.

The sequence is that of Large ribosomal subunit protein uL29 from Caldanaerobacter subterraneus subsp. tengcongensis (strain DSM 15242 / JCM 11007 / NBRC 100824 / MB4) (Thermoanaerobacter tengcongensis).